We begin with the raw amino-acid sequence, 168 residues long: Peptide deformylase (168 aa).

Residues cysteine 92 and histidine 134 each contribute to the Fe cation site. The active site involves glutamate 135. Residue histidine 138 participates in Fe cation binding.

Belongs to the polypeptide deformylase family. It depends on Fe(2+) as a cofactor.

The enzyme catalyses N-terminal N-formyl-L-methionyl-[peptide] + H2O = N-terminal L-methionyl-[peptide] + formate. Its function is as follows. Removes the formyl group from the N-terminal Met of newly synthesized proteins. Requires at least a dipeptide for an efficient rate of reaction. N-terminal L-methionine is a prerequisite for activity but the enzyme has broad specificity at other positions. In Stutzerimonas stutzeri (strain A1501) (Pseudomonas stutzeri), this protein is Peptide deformylase.